A 516-amino-acid polypeptide reads, in one-letter code: Histidine ammonia-lyase (516 aa).

A cross-link (5-imidazolinone (Ala-Gly)) is located at residues 143–145; it reads ASG. Ser144 bears the 2,3-didehydroalanine (Ser) mark.

The protein belongs to the PAL/histidase family. Post-translationally, contains an active site 4-methylidene-imidazol-5-one (MIO), which is formed autocatalytically by cyclization and dehydration of residues Ala-Ser-Gly.

The protein resides in the cytoplasm. The enzyme catalyses L-histidine = trans-urocanate + NH4(+). Its pathway is amino-acid degradation; L-histidine degradation into L-glutamate; N-formimidoyl-L-glutamate from L-histidine: step 1/3. In Koribacter versatilis (strain Ellin345), this protein is Histidine ammonia-lyase.